Here is a 331-residue protein sequence, read N- to C-terminus: 6-phosphogluconolactonase (331 aa).

Position 287 is an N6-acetyllysine (lysine 287).

This sequence belongs to the cycloisomerase 2 family.

It catalyses the reaction 6-phospho-D-glucono-1,5-lactone + H2O = 6-phospho-D-gluconate + H(+). It functions in the pathway carbohydrate degradation; pentose phosphate pathway; D-ribulose 5-phosphate from D-glucose 6-phosphate (oxidative stage): step 2/3. Its function is as follows. Catalyzes the hydrolysis of 6-phosphogluconolactone to 6-phosphogluconate. This is 6-phosphogluconolactonase from Shigella boydii serotype 18 (strain CDC 3083-94 / BS512).